The following is a 305-amino-acid chain: UDP-3-O-acyl-N-acetylglucosamine deacetylase (305 aa).

Zn(2+)-binding residues include H79, H238, and D242. H265 serves as the catalytic Proton donor.

Belongs to the LpxC family. The cofactor is Zn(2+).

It carries out the reaction a UDP-3-O-[(3R)-3-hydroxyacyl]-N-acetyl-alpha-D-glucosamine + H2O = a UDP-3-O-[(3R)-3-hydroxyacyl]-alpha-D-glucosamine + acetate. It functions in the pathway glycolipid biosynthesis; lipid IV(A) biosynthesis; lipid IV(A) from (3R)-3-hydroxytetradecanoyl-[acyl-carrier-protein] and UDP-N-acetyl-alpha-D-glucosamine: step 2/6. Catalyzes the hydrolysis of UDP-3-O-myristoyl-N-acetylglucosamine to form UDP-3-O-myristoylglucosamine and acetate, the committed step in lipid A biosynthesis. In Salmonella agona (strain SL483), this protein is UDP-3-O-acyl-N-acetylglucosamine deacetylase.